Consider the following 95-residue polypeptide: Aspartyl/glutamyl-tRNA(Asn/Gln) amidotransferase subunit C (95 aa).

It belongs to the GatC family. Heterotrimer of A, B and C subunits.

The enzyme catalyses L-glutamyl-tRNA(Gln) + L-glutamine + ATP + H2O = L-glutaminyl-tRNA(Gln) + L-glutamate + ADP + phosphate + H(+). It catalyses the reaction L-aspartyl-tRNA(Asn) + L-glutamine + ATP + H2O = L-asparaginyl-tRNA(Asn) + L-glutamate + ADP + phosphate + 2 H(+). Functionally, allows the formation of correctly charged Asn-tRNA(Asn) or Gln-tRNA(Gln) through the transamidation of misacylated Asp-tRNA(Asn) or Glu-tRNA(Gln) in organisms which lack either or both of asparaginyl-tRNA or glutaminyl-tRNA synthetases. The reaction takes place in the presence of glutamine and ATP through an activated phospho-Asp-tRNA(Asn) or phospho-Glu-tRNA(Gln). In Jannaschia sp. (strain CCS1), this protein is Aspartyl/glutamyl-tRNA(Asn/Gln) amidotransferase subunit C.